We begin with the raw amino-acid sequence, 379 residues long: Sulfate adenylyltransferase (379 aa).

Belongs to the sulfate adenylyltransferase family.

It catalyses the reaction sulfate + ATP + H(+) = adenosine 5'-phosphosulfate + diphosphate. It participates in sulfur metabolism; hydrogen sulfide biosynthesis; sulfite from sulfate: step 1/3. The polypeptide is Sulfate adenylyltransferase (Cenarchaeum symbiosum (strain A)).